Here is a 91-residue protein sequence, read N- to C-terminus: Large ribosomal subunit protein bL31 (91 aa).

The disordered stretch occupies residues 62-91 (RRKYSGTKPQQTAKGKKAAPKSTPKTNKKG).

It belongs to the bacterial ribosomal protein bL31 family. Type A subfamily. Part of the 50S ribosomal subunit.

Binds the 23S rRNA. The sequence is that of Large ribosomal subunit protein bL31 from Thermosynechococcus vestitus (strain NIES-2133 / IAM M-273 / BP-1).